A 243-amino-acid polypeptide reads, in one-letter code: Cell division protein ZipA (243 aa).

Residues 1–4 lie on the Periplasmic side of the membrane; that stretch reads MSDM. Residues 5 to 25 form a helical membrane-spanning segment; sequence AMIRIGILIAGLLLVAAIFLF. Residues 26–243 are Cytoplasmic-facing; that stretch reads GRPKKSPQGR…APPLTKSPRW (218 aa). The interval 30–89 is disordered; sequence KSPQGRRVDKDEGQPRERREPVISSEFGVEDDAAERAEGVEQSELNLEGQDASGGNEVGK. Residues 35 to 50 are compositionally biased toward basic and acidic residues; the sequence is RRVDKDEGQPRERREP.

Belongs to the ZipA family. In terms of assembly, interacts with FtsZ via their C-terminal domains.

It is found in the cell inner membrane. In terms of biological role, essential cell division protein that stabilizes the FtsZ protofilaments by cross-linking them and that serves as a cytoplasmic membrane anchor for the Z ring. Also required for the recruitment to the septal ring of downstream cell division proteins. The protein is Cell division protein ZipA of Xanthomonas euvesicatoria pv. vesicatoria (strain 85-10) (Xanthomonas campestris pv. vesicatoria).